Reading from the N-terminus, the 252-residue chain is Geranylgeranylglyceryl phosphate synthase (252 aa).

Residues Asp-22 and Ser-51 each contribute to the Mg(2+) site. Residues 170–176, 201–202, and 223–224 each bind sn-glycerol 1-phosphate; these read YFEAGSG, GG, and GS.

Belongs to the GGGP/HepGP synthase family. Group II subfamily. Requires Mg(2+) as cofactor.

It localises to the cytoplasm. It catalyses the reaction sn-glycerol 1-phosphate + (2E,6E,10E)-geranylgeranyl diphosphate = sn-3-O-(geranylgeranyl)glycerol 1-phosphate + diphosphate. Its pathway is membrane lipid metabolism; glycerophospholipid metabolism. Prenyltransferase that catalyzes the transfer of the geranylgeranyl moiety of geranylgeranyl diphosphate (GGPP) to the C3 hydroxyl of sn-glycerol-1-phosphate (G1P). This reaction is the first ether-bond-formation step in the biosynthesis of archaeal membrane lipids. The chain is Geranylgeranylglyceryl phosphate synthase from Thermoplasma volcanium (strain ATCC 51530 / DSM 4299 / JCM 9571 / NBRC 15438 / GSS1).